The sequence spans 437 residues: MMSVTVETLENLERKVVLSLPWSEINAETDKKLKQTQRRAKIDGFRPGKAPLKMIAQMYGASAQNDVINELVQRRFYDVAVAQELKVAGFPRFEGVEEQDDKESFKVAAIFEVFPEVVIGDLSAQEVEKVTASVGDAEVDQTVEILRKQRTRFNHVEREARNGDRVIIDFEGKIDGEPFAGGASKNYAFVLGASQMLPEFEAGVVGMKAGESKDVTVNFPEDYHGKDVAGKTAVFTITLNNVSEATLPEVDADFAKALGIADGDVAKMREEVQKNVSREVERRVNEQTKESVMNALLKAVELKAPVALVNEEAARLANEMKQNFVNQGMADAANLDLPLDMFKEQAERRVSLGLILAKLVDENKLEPTEEQIKAVVANFAESYEDPQEVIDWYYADPSRLQAPTSLAVESNVVDFVLGKAKVNEKALSFDEVMGAQA.

Residues 163-248 enclose the PPIase FKBP-type domain; that stretch reads GDRVIIDFEG…LNNVSEATLP (86 aa).

The protein belongs to the FKBP-type PPIase family. Tig subfamily.

It localises to the cytoplasm. The catalysed reaction is [protein]-peptidylproline (omega=180) = [protein]-peptidylproline (omega=0). Involved in protein export. Acts as a chaperone by maintaining the newly synthesized protein in an open conformation. Functions as a peptidyl-prolyl cis-trans isomerase. The polypeptide is Trigger factor (tig) (Neisseria meningitidis serogroup B (strain ATCC BAA-335 / MC58)).